Consider the following 559-residue polypeptide: Hepatocyte nuclear factor 1-beta (559 aa).

The interval 1-31 (MVSKLTSLQQELLSALLSSGVTKEVLVQALE) is dimerization. The HNF-p1 domain maps to 1–32 (MVSKLTSLQQELLSALLSSGVTKEVLVQALEE). A phosphoserine mark is found at serine 49, serine 52, serine 75, and serine 80. In terms of domain architecture, POU-specific atypical spans 93-188 (KELQALNTEE…ILRQFNQTVQ (96 aa)). The homeobox; HNF1-type DNA-binding region spans 231–312 (MRRNRFKWGP…RRKEEEAFRQ (82 aa)). Positions 328-341 (NTLLSHSSPHHQPS) are enriched in low complexity. Residues 328-371 (NTLLSHSSPHHQPSTSPPNKLPGVRYNQQGNNEVTSSSTISHHG) are disordered. Polar residues predominate over residues 353–371 (YNQQGNNEVTSSSTISHHG).

It belongs to the HNF1 homeobox family. As to quaternary structure, binds DNA as a dimer. Can form homodimer or heterodimer with HNF1-alpha. Interacts (via HNF-p1 domain) with PCBD1; the interaction increases its transactivation activity.

The protein resides in the nucleus. In terms of biological role, transcription factor that binds to the inverted palindrome 5'-GTTAATNATTAAC-3'. Binds to the FPC element in the cAMP regulatory unit of the PLAU gene. Transcriptional activity is increased by coactivator PCBD1. This is Hepatocyte nuclear factor 1-beta (HNF1B) from Sus scrofa (Pig).